A 170-amino-acid polypeptide reads, in one-letter code: Large ribosomal subunit protein uL22z (170 aa).

It belongs to the universal ribosomal protein uL22 family.

The chain is Large ribosomal subunit protein uL22z from Hordeum vulgare (Barley).